Consider the following 413-residue polypeptide: Putative tRNA pseudouridine synthase C16C4.06c (413 aa).

Asp-96 functions as the Nucleophile in the catalytic mechanism. Residue Tyr-154 coordinates substrate.

This sequence belongs to the tRNA pseudouridine synthase TruA family.

The protein localises to the cytoplasm. The protein resides in the nucleus. The catalysed reaction is a uridine in tRNA = a pseudouridine in tRNA. This is Putative tRNA pseudouridine synthase C16C4.06c from Schizosaccharomyces pombe (strain 972 / ATCC 24843) (Fission yeast).